The chain runs to 95 residues: Integration host factor subunit beta (95 aa).

Belongs to the bacterial histone-like protein family. Heterodimer of an alpha and a beta chain.

Functionally, this protein is one of the two subunits of integration host factor, a specific DNA-binding protein that functions in genetic recombination as well as in transcriptional and translational control. The protein is Integration host factor subunit beta of Erwinia tasmaniensis (strain DSM 17950 / CFBP 7177 / CIP 109463 / NCPPB 4357 / Et1/99).